The sequence spans 261 residues: tRNA pseudouridine synthase A (261 aa).

Asp51 (nucleophile) is an active-site residue. Tyr109 is a substrate binding site.

It belongs to the tRNA pseudouridine synthase TruA family. Homodimer.

The enzyme catalyses uridine(38/39/40) in tRNA = pseudouridine(38/39/40) in tRNA. In terms of biological role, formation of pseudouridine at positions 38, 39 and 40 in the anticodon stem and loop of transfer RNAs. This is tRNA pseudouridine synthase A from Shewanella sp. (strain MR-4).